The following is a 76-amino-acid chain: Omega-scoloptoxin(13)-Ssm2b (76 aa).

Positions 1-22 (MAYIYALIFAIVVCMNTDVIQA) are cleaved as a signal peptide.

This sequence belongs to the scoloptoxin-13 family. Post-translationally, contains 3 disulfide bonds. Expressed by the venom gland.

It localises to the secreted. Its function is as follows. Inhibits voltage-gated calcium channel (Cav) currents. This Scolopendra mutilans (Chinese red-headed centipede) protein is Omega-scoloptoxin(13)-Ssm2b.